Consider the following 767-residue polypeptide: Protein SQS1 (767 aa).

Basic residues predominate over residues 1-17; that stretch reads MAKRHSHYQGSRRRHAR. Residues 1-60 are disordered; it reads MAKRHSHYQGSRRRHARGSNSKKAGRGNAKGIQGRKIKKKPTPTNSWHNSSIPLGEGDLD. Over residues 42 to 52 the composition is skewed to polar residues; the sequence is TPTNSWHNSSI. Residue Ser-105 is modified to Phosphoserine. Residues 176–185 show a composition bias toward acidic residues; it reads EDSENEDDDS. The disordered stretch occupies residues 176–200; sequence EDSENEDDDSQNSPSTDHSLSSNES. Phosphoserine occurs at positions 217, 255, 334, 343, and 345. Positions 466 to 493 are disordered; sequence YSDIPISDSSDEGDSYEGDSYEDDEDMA. Residues 474 to 492 show a composition bias toward acidic residues; it reads SSDEGDSYEGDSYEDDEDM. Residues 594 to 656 form the R3H domain; it reads GLHIQNIKDE…HTSVVVEKIK (63 aa). A G-patch domain is found at 720 to 767; sequence NENIGRRMLEKLGWKSGEGLGIQGNKGISEPIFAKIKKNRSGLRHSES.

This sequence belongs to the SQS1 family.

Its subcellular location is the cytoplasm. It is found in the nucleus. May be involved in splicing since overexpression antagonizes the suppression of splicing defects by SPP382 mutants. The chain is Protein SQS1 (SQS1) from Saccharomyces cerevisiae (strain YJM789) (Baker's yeast).